Here is an 848-residue protein sequence, read N- to C-terminus: Aryl hydrocarbon receptor (848 aa).

Positions 1-9 (MSSGANITY) are excised as a propeptide. The disordered stretch occupies residues 1–38 (MSSGANITYASRKRRKPVQKTVKPIPAEGIKSNPSKRH). Short sequence motifs (nuclear localization signal) lie at residues 12-15 (RKRR) and 36-41 (KRHRDR). Residues 26–79 (PAEGIKSNPSKRHRDRLNTELDRLASLLPFPQDVINKLDKLSVLRLSVSYLRAK) form the bHLH domain. The tract at residues 37–65 (RHRDRLNTELDRLASLLPFPQDVINKLDK) is DNA-binding. Required for maintaining the overall integrity of the AHR:ARNT heterodimer and its transcriptional activity regions lie at residues 49–81 (LASL…AKSF), 116–124 (LLQALNGFV), and 260–262 (FAI). Positions 63–71 (LDKLSVLRL) match the Nuclear export signal motif. Residues 116–179 (LLQALNGFVL…RQLHWALNPD (64 aa)) form the PAS 1 domain. Residues 269–336 (PSILEIRTKN…CAESHIRMIK (68 aa)) enclose the PAS 2 domain. Residues 342–380 (MTVFRLFAKHSRWRWVQSNARLIYRNGRPDYIIATQRPL) enclose the PAC domain. The interval 421-449 (LPIRTKSNTSRKDWAPQSTPSKDSFHPSS) is disordered. Over residues 436–449 (PQSTPSKDSFHPSS) the composition is skewed to polar residues.

In terms of assembly, homodimer. Heterodimer; efficient DNA binding requires dimerization with another bHLH protein. Interacts with ARNT; the heterodimer ARNT:AHR binds to core DNA sequence 5'-TGCGTG-3' within the dioxin response element (DRE) of target gene promoters and activates their transcription. Binds MYBBP1A. Interacts with coactivators including SRC-1, RIP140 and NOCA7, and with the corepressor SMRT. Interacts with NEDD8 and IVNS1ABP. Interacts with BMAL1. Interacts with HSP90AB1. Interacts with TIPARP; leading to mono-ADP-ribosylation of AHR and subsequent inhibition of AHR. Mono-ADP-ribosylated, leading to inhibit transcription activator activity of AHR. Expressed in all tissues tested including brain, heart, kidney, liver, lung, muscle, ovary, skin, spleen and thymus.

Its subcellular location is the cytoplasm. The protein resides in the nucleus. Ligand-activated transcription factor that enables cells to adapt to changing conditions by sensing compounds from the environment, diet, microbiome and cellular metabolism, and which plays important roles in development, immunity and cancer. Upon ligand binding, translocates into the nucleus, where it heterodimerizes with ARNT and induces transcription by binding to xenobiotic response elements (XRE). Regulates a variety of biological processes, including angiogenesis, hematopoiesis, drug and lipid metabolism, cell motility and immune modulation. Xenobiotics can act as ligands: upon xenobiotic-binding, activates the expression of multiple phase I and II xenobiotic chemical metabolizing enzyme genes (such as the CYP1A1 gene). Mediates biochemical and toxic effects of halogenated aromatic hydrocarbons. Next to xenobiotics, natural ligands derived from plants, microbiota, and endogenous metabolism are potent AHR agonists. Tryptophan (Trp) derivatives constitute an important class of endogenous AHR ligands. Acts as a negative regulator of anti-tumor immunity: indoles and kynurenic acid generated by Trp catabolism act as ligand and activate AHR, thereby promoting AHR-driven cancer cell motility and suppressing adaptive immunity. Regulates the circadian clock by inhibiting the basal and circadian expression of the core circadian component PER1. Inhibits PER1 by repressing the CLOCK-BMAL1 heterodimer mediated transcriptional activation of PER1. The heterodimer ARNT:AHR binds to core DNA sequence 5'-TGCGTG-3' within the dioxin response element (DRE) of target gene promoters and activates their transcription. This is Aryl hydrocarbon receptor (Ahr) from Mus musculus (Mouse).